Reading from the N-terminus, the 127-residue chain is Small ribosomal subunit protein uS13 (127 aa).

Residues 93 to 127 (RRGMPVRGQRTRTNARTRRGRRGQAIGIKKKATKK) are disordered.

It belongs to the universal ribosomal protein uS13 family. As to quaternary structure, part of the 30S ribosomal subunit. Forms a loose heterodimer with protein S19. Forms two bridges to the 50S subunit in the 70S ribosome.

In terms of biological role, located at the top of the head of the 30S subunit, it contacts several helices of the 16S rRNA. In the 70S ribosome it contacts the 23S rRNA (bridge B1a) and protein L5 of the 50S subunit (bridge B1b), connecting the 2 subunits; these bridges are implicated in subunit movement. Contacts the tRNAs in the A and P-sites. The polypeptide is Small ribosomal subunit protein uS13 (Chloroflexus aurantiacus (strain ATCC 29366 / DSM 635 / J-10-fl)).